The primary structure comprises 119 residues: Large ribosomal subunit protein bL17 (119 aa).

This sequence belongs to the bacterial ribosomal protein bL17 family. Part of the 50S ribosomal subunit. Contacts protein L32.

This chain is Large ribosomal subunit protein bL17, found in Acholeplasma laidlawii (strain PG-8A).